A 156-amino-acid polypeptide reads, in one-letter code: Small ribosomal subunit protein uS7 (156 aa).

It belongs to the universal ribosomal protein uS7 family. In terms of assembly, part of the 30S ribosomal subunit. Contacts proteins S9 and S11.

Functionally, one of the primary rRNA binding proteins, it binds directly to 16S rRNA where it nucleates assembly of the head domain of the 30S subunit. Is located at the subunit interface close to the decoding center, probably blocks exit of the E-site tRNA. The protein is Small ribosomal subunit protein uS7 of Trichlorobacter lovleyi (strain ATCC BAA-1151 / DSM 17278 / SZ) (Geobacter lovleyi).